Reading from the N-terminus, the 149-residue chain is Large ribosomal subunit protein bL9 (149 aa).

This sequence belongs to the bacterial ribosomal protein bL9 family.

Functionally, binds to the 23S rRNA. The sequence is that of Large ribosomal subunit protein bL9 from Haemophilus influenzae (strain PittEE).